A 182-amino-acid chain; its full sequence is Crossover junction endodeoxyribonuclease RuvC (182 aa).

Active-site residues include aspartate 7, glutamate 69, and aspartate 141. Mg(2+) is bound by residues aspartate 7, glutamate 69, and aspartate 141.

It belongs to the RuvC family. As to quaternary structure, homodimer which binds Holliday junction (HJ) DNA. The HJ becomes 2-fold symmetrical on binding to RuvC with unstacked arms; it has a different conformation from HJ DNA in complex with RuvA. In the full resolvosome a probable DNA-RuvA(4)-RuvB(12)-RuvC(2) complex forms which resolves the HJ. Requires Mg(2+) as cofactor.

It is found in the cytoplasm. The enzyme catalyses Endonucleolytic cleavage at a junction such as a reciprocal single-stranded crossover between two homologous DNA duplexes (Holliday junction).. Functionally, the RuvA-RuvB-RuvC complex processes Holliday junction (HJ) DNA during genetic recombination and DNA repair. Endonuclease that resolves HJ intermediates. Cleaves cruciform DNA by making single-stranded nicks across the HJ at symmetrical positions within the homologous arms, yielding a 5'-phosphate and a 3'-hydroxyl group; requires a central core of homology in the junction. The consensus cleavage sequence is 5'-(A/T)TT(C/G)-3'. Cleavage occurs on the 3'-side of the TT dinucleotide at the point of strand exchange. HJ branch migration catalyzed by RuvA-RuvB allows RuvC to scan DNA until it finds its consensus sequence, where it cleaves and resolves the cruciform DNA. The sequence is that of Crossover junction endodeoxyribonuclease RuvC from Polaromonas sp. (strain JS666 / ATCC BAA-500).